The following is a 374-amino-acid chain: Anhydro-N-acetylmuramic acid kinase (374 aa).

12 to 19 (GTSLDGVD) contacts ATP.

This sequence belongs to the anhydro-N-acetylmuramic acid kinase family.

The catalysed reaction is 1,6-anhydro-N-acetyl-beta-muramate + ATP + H2O = N-acetyl-D-muramate 6-phosphate + ADP + H(+). Its pathway is amino-sugar metabolism; 1,6-anhydro-N-acetylmuramate degradation. It functions in the pathway cell wall biogenesis; peptidoglycan recycling. Catalyzes the specific phosphorylation of 1,6-anhydro-N-acetylmuramic acid (anhMurNAc) with the simultaneous cleavage of the 1,6-anhydro ring, generating MurNAc-6-P. Is required for the utilization of anhMurNAc either imported from the medium or derived from its own cell wall murein, and thus plays a role in cell wall recycling. This is Anhydro-N-acetylmuramic acid kinase from Escherichia fergusonii (strain ATCC 35469 / DSM 13698 / CCUG 18766 / IAM 14443 / JCM 21226 / LMG 7866 / NBRC 102419 / NCTC 12128 / CDC 0568-73).